The following is a 394-amino-acid chain: Tyrosine--tRNA ligase, cytoplasmic (394 aa).

Ser-2 is subject to N-acetylserine. Tyr-43 contributes to the L-tyrosine binding site. A 'HIGH' region motif is present at residues 48-56 (PTGRPHCGY). L-tyrosine-binding residues include Tyr-170, Gln-174, Asp-177, and Gln-192. Positions 227–231 (KMSAS) match the 'KMSKS' region motif. Residue Ser-235 is modified to Phosphoserine. Positions 348-394 (QEASEKGYPVATPQKSKKAKKPKNKGTKYPGATKTNEIATKLEETKL) are disordered. Phosphothreonine is present on Thr-359. Positions 360 to 378 (PQKSKKAKKPKNKGTKYPG) match the Nuclear localization signal motif. Basic residues predominate over residues 362 to 373 (KSKKAKKPKNKG).

Belongs to the class-I aminoacyl-tRNA synthetase family. As to quaternary structure, homodimer. Interacts with KNR4/SMI1.

It is found in the cytoplasm. Its subcellular location is the nucleus. It catalyses the reaction tRNA(Tyr) + L-tyrosine + ATP = L-tyrosyl-tRNA(Tyr) + AMP + diphosphate + H(+). With respect to regulation, inhibited by N-ethylmaleimide and p-chloromercuribenzoate. Its function is as follows. Catalyzes the attachment of L-tyrosine to tRNA(Tyr) in a two-step reaction: L-tyrosine is first activated by ATP to form Tyr-AMP and then transferred to the acceptor end of tRNA(Tyr). The specificity determinants on tRNA(Tyr) are the base pair C1-G72, the discriminator residue A73, and the three anticodon bases G34, U35 and A36. Also involved in nuclear tRNA export. Also attaches D-Tyr to tRNA(Tyr), this reaction is about 150-fold less efficient than attachment of L-Tyr. The sequence is that of Tyrosine--tRNA ligase, cytoplasmic from Saccharomyces cerevisiae (strain ATCC 204508 / S288c) (Baker's yeast).